We begin with the raw amino-acid sequence, 255 residues long: Syntaxin-6 (255 aa).

Position 2 is an N-acetylserine (S2). S2 is subject to Phosphoserine. A required for interaction with VPS51 region spans residues S2–Q168. The Cytoplasmic segment spans residues S2 to Q234. Positions E41–N74 form a coiled coil. S129 and S152 each carry phosphoserine. A t-SNARE coiled-coil homology domain is found at Q163 to V225. Residues W235–L255 form a helical; Anchor for type IV membrane protein membrane-spanning segment.

Belongs to the syntaxin family. In terms of assembly, identified in a complex containing STX6, STX12, VAMP4 and VTI1A. Binds EEA1. Interacts with VPS45A. Interacts with MARCHF2; the interaction promotes MARCHF2-mediated ubiquitination and degradation of CFTR. Interacts with MARCHF3. Interacts with GOPC. Interacts with BLTP3B (via C-terminal coiled-coil domain). Interacts with BAIAP3; this interaction is increased in the presence of calcium. Interacts with VPS13B.

The protein localises to the golgi apparatus membrane. It localises to the golgi apparatus. It is found in the trans-Golgi network membrane. Its subcellular location is the recycling endosome membrane. Functionally, SNARE promoting movement of transport vesicles to target membranes. Targets endosomes to the trans-Golgi network, and may therefore function in retrograde trafficking. Together with SNARE STX12, promotes movement of vesicles from endosomes to the cell membrane, and may therefore function in the endocytic recycling pathway. The protein is Syntaxin-6 (STX6) of Homo sapiens (Human).